The following is a 101-amino-acid chain: NADH-quinone oxidoreductase subunit K (101 aa).

3 consecutive transmembrane segments (helical) span residues 4–24 (LADYLILGALLFSLGVAGIFI), 30–50 (LVLLMCIELILLAVNMNFIAF), and 61–81 (VFVFFILTVAAAEAAIGLAIV).

The protein belongs to the complex I subunit 4L family. NDH-1 is composed of 14 different subunits. Subunits NuoA, H, J, K, L, M, N constitute the membrane sector of the complex.

The protein resides in the cell inner membrane. It carries out the reaction a quinone + NADH + 5 H(+)(in) = a quinol + NAD(+) + 4 H(+)(out). In terms of biological role, NDH-1 shuttles electrons from NADH, via FMN and iron-sulfur (Fe-S) centers, to quinones in the respiratory chain. The immediate electron acceptor for the enzyme in this species is believed to be ubiquinone. Couples the redox reaction to proton translocation (for every two electrons transferred, four hydrogen ions are translocated across the cytoplasmic membrane), and thus conserves the redox energy in a proton gradient. The polypeptide is NADH-quinone oxidoreductase subunit K (Alkalilimnicola ehrlichii (strain ATCC BAA-1101 / DSM 17681 / MLHE-1)).